The primary structure comprises 447 residues: Ribosomal protein uS12 methylthiotransferase RimO (447 aa).

An MTTase N-terminal domain is found at 6–122; the sequence is EKVSMVSLGC…IAEIIEEKSS (117 aa). [4Fe-4S] cluster contacts are provided by cysteine 15, cysteine 51, cysteine 85, cysteine 160, cysteine 164, and cysteine 167. The Radical SAM core domain maps to 146–376; the sequence is SSPAYTAYLK…MKAQARVSFK (231 aa). The TRAM domain maps to 379 to 447; that stretch reads RRLIDTEEQV…DYDLIGEIIS (69 aa).

This sequence belongs to the methylthiotransferase family. RimO subfamily. Requires [4Fe-4S] cluster as cofactor.

It is found in the cytoplasm. It catalyses the reaction L-aspartate(89)-[ribosomal protein uS12]-hydrogen + (sulfur carrier)-SH + AH2 + 2 S-adenosyl-L-methionine = 3-methylsulfanyl-L-aspartate(89)-[ribosomal protein uS12]-hydrogen + (sulfur carrier)-H + 5'-deoxyadenosine + L-methionine + A + S-adenosyl-L-homocysteine + 2 H(+). Functionally, catalyzes the methylthiolation of an aspartic acid residue of ribosomal protein uS12. This Geobacter sulfurreducens (strain ATCC 51573 / DSM 12127 / PCA) protein is Ribosomal protein uS12 methylthiotransferase RimO.